Consider the following 730-residue polypeptide: uncharacterized protein (730 aa).

The span at 615-625 (FDKENSFDPSD) shows a compositional bias: basic and acidic residues. Disordered stretches follow at residues 615–667 (FDKE…SSFS) and 684–730 (KSGS…FGKI). 2 stretches are compositionally biased toward low complexity: residues 653 to 667 (SSSS…SSFS) and 684 to 701 (KSGS…NSSS). Basic residues predominate over residues 713-723 (KKKKKKKKKKS).

This is an uncharacterized protein from Saccharomyces cerevisiae (strain ATCC 204508 / S288c) (Baker's yeast).